Here is a 716-residue protein sequence, read N- to C-terminus: DNA replication licensing factor MCM7 (716 aa).

Residues 178–205 (CEDCGHEIYQEVTSRVFMPLFKCPSSRC) form a C4-type zinc finger. The MCM domain maps to 326–531 (IYNKLSRSLA…MDSDLELAKH (206 aa)). 376–383 (GDPGVAKS) provides a ligand contact to ATP. An Arginine finger motif is present at residues 508 to 511 (SRFD).

Belongs to the MCM family. In terms of assembly, component of the minichromosome maintenance (MCM) complex, a heterotetramer composed of MCM2, MCM3, MCM4, MCM5, MCM6 and MCM7. Interacts with ETG1. Expressed in shoot apex and flower buds.

It localises to the nucleus. It is found in the cytoplasm. The enzyme catalyses ATP + H2O = ADP + phosphate + H(+). Probable component of the MCM2-7 complex (MCM complex) that may function as a DNA helicase and which is essential to undergo a single round of replication initiation and elongation per cell cycle in eukaryotic cells. Required for megagametophyte and embryo development. The sequence is that of DNA replication licensing factor MCM7 (MCM7) from Arabidopsis thaliana (Mouse-ear cress).